The sequence spans 367 residues: Phosphoribosylaminoimidazole-succinocarboxamide synthase (367 aa).

Belongs to the SAICAR synthetase family.

It catalyses the reaction 5-amino-1-(5-phospho-D-ribosyl)imidazole-4-carboxylate + L-aspartate + ATP = (2S)-2-[5-amino-1-(5-phospho-beta-D-ribosyl)imidazole-4-carboxamido]succinate + ADP + phosphate + 2 H(+). It functions in the pathway purine metabolism; IMP biosynthesis via de novo pathway; 5-amino-1-(5-phospho-D-ribosyl)imidazole-4-carboxamide from 5-amino-1-(5-phospho-D-ribosyl)imidazole-4-carboxylate: step 1/2. This chain is Phosphoribosylaminoimidazole-succinocarboxamide synthase, found in Shewanella sp. (strain MR-7).